The primary structure comprises 453 residues: RuvB-like helicase 1 (453 aa).

71-78 (GGPGTGKT) contacts ATP.

This sequence belongs to the RuvB family. May form heterododecamers with RVB2. Component of the SWR1 chromatin remodeling complex, the INO80 chromatin remodeling complex, and of the R2TP complex.

It localises to the nucleus. It carries out the reaction ATP + H2O = ADP + phosphate + H(+). In terms of biological role, DNA helicase which participates in several chromatin remodeling complexes, including the SWR1 and the INO80 complexes. The SWR1 complex mediates the ATP-dependent exchange of histone H2A for the H2A variant HZT1 leading to transcriptional regulation of selected genes by chromatin remodeling. The INO80 complex remodels chromatin by shifting nucleosomes and is involved in DNA repair. Also involved in pre-rRNA processing. This Yarrowia lipolytica (strain CLIB 122 / E 150) (Yeast) protein is RuvB-like helicase 1 (RVB1).